A 192-amino-acid chain; its full sequence is Rho-related protein racC (192 aa).

13-20 (GDGAVGKT) lines the GTP pocket. The Effector region signature appears at 35-43 (YIPTVFDNY). GTP is bound by residues 60–64 (DTAGQ) and 118–121 (TKLD). Cys-189 carries the cysteine methyl ester modification. A lipid anchor (S-geranylgeranyl cysteine) is attached at Cys-189. Positions 190–192 (IVM) are cleaved as a propeptide — removed in mature form.

The protein belongs to the small GTPase superfamily. Rho family. As to quaternary structure, interacts with pakB.

It is found in the cell membrane. The chain is Rho-related protein racC (racC) from Dictyostelium discoideum (Social amoeba).